Here is a 692-residue protein sequence, read N- to C-terminus: Formate hydrogenlyase transcriptional activator FhlA (692 aa).

Residues 202–344 (DMDELVSEVA…QIAERVAIAV (143 aa)) form the GAF domain. A Sigma-54 factor interaction domain is found at 381–610 (IIGRSEAMYS…LENVIERAVL (230 aa)). ATP-binding positions include 409–416 (GETGTGKE) and 472–481 (ADKSSLFLDE). The H-T-H motif DNA-binding region spans 663 to 682 (PKGAAQRLGLKRTTLLSRMK).

Functionally, required for induction of expression of the formate dehydrogenase H and hydrogenase-3 structural genes. Also activates expression of hyf operon (encodes the silent hydrogenase-4 gene cluster). The sequence is that of Formate hydrogenlyase transcriptional activator FhlA (fhlA) from Escherichia coli (strain K12).